We begin with the raw amino-acid sequence, 214 residues long: Protein transport protein SEC22 (214 aa).

The Cytoplasmic segment spans residues 1-192; sequence MIKSTLIYRE…QKINFDLLIS (192 aa). Residues 6 to 117 form the Longin domain; that stretch reads LIYREDGLPL…YQFVNFDNFL (112 aa). A v-SNARE coiled-coil homology domain is found at 132–192; the sequence is NLDQLNQELV…QKINFDLLIS (61 aa). At Ser-160 the chain carries Phosphoserine. Residues 193-213 form a helical; Anchor for type IV membrane protein membrane-spanning segment; it reads QYAPIVIVAFFFVFLFWWIFL. Residue Lys-214 is a topological domain, vesicular.

It belongs to the synaptobrevin family. In terms of assembly, component of two distinct SNARE complexes consisting of SED5, BOS1, BET1 and SEC22 or UFE1, USE1, SEC20 and SEC22. YKT6 can probably replace SEC22 as subunit of either complex. Interacts with SEC24, YIF1 and YIP1.

It localises to the membrane. The protein resides in the endoplasmic reticulum membrane. Its subcellular location is the golgi apparatus membrane. Nonessential SNARE involved in targeting and fusion of ER-derived transport vesicles with the Golgi complex as well as Golgi-derived retrograde transport vesicles with the ER. This is Protein transport protein SEC22 (SEC22) from Saccharomyces cerevisiae (strain ATCC 204508 / S288c) (Baker's yeast).